Here is a 122-residue protein sequence, read N- to C-terminus: Large ribosomal subunit protein bL12 (122 aa).

Belongs to the bacterial ribosomal protein bL12 family. As to quaternary structure, homodimer. Part of the 50S ribosomal subunit; present in 4 copies per ribosome. Forms part of the ribosomal stalk which helps the ribosome interact with GTP-bound translation factors. Forms a pentameric L10(L12)2(L12)2 complex, where L10 forms an elongated spine to which 2 L12 dimers bind in a sequential fashion.

Functionally, forms part of the ribosomal stalk which helps the ribosome interact with GTP-bound translation factors. Is thus essential for accurate translation. The chain is Large ribosomal subunit protein bL12 from Geobacillus stearothermophilus (Bacillus stearothermophilus).